The sequence spans 404 residues: Nicotinate phosphoribosyltransferase (404 aa).

His225 carries the post-translational modification Phosphohistidine; by autocatalysis.

The protein belongs to the NAPRTase family. Transiently phosphorylated on a His residue during the reaction cycle. Phosphorylation strongly increases the affinity for substrates and increases the rate of nicotinate D-ribonucleotide production. Dephosphorylation regenerates the low-affinity form of the enzyme, leading to product release.

The catalysed reaction is nicotinate + 5-phospho-alpha-D-ribose 1-diphosphate + ATP + H2O = nicotinate beta-D-ribonucleotide + ADP + phosphate + diphosphate. Its pathway is cofactor biosynthesis; NAD(+) biosynthesis; nicotinate D-ribonucleotide from nicotinate: step 1/1. Catalyzes the synthesis of beta-nicotinate D-ribonucleotide from nicotinate and 5-phospho-D-ribose 1-phosphate at the expense of ATP. In Acinetobacter baumannii (strain ATCC 17978 / DSM 105126 / CIP 53.77 / LMG 1025 / NCDC KC755 / 5377), this protein is Nicotinate phosphoribosyltransferase.